A 62-amino-acid chain; its full sequence is Photosystem II reaction center protein Z (62 aa).

2 helical membrane passes run 8–28 (TMFA…ITFA) and 41–61 (FSGV…NSFI).

Belongs to the PsbZ family. In terms of assembly, PSII is composed of 1 copy each of membrane proteins PsbA, PsbB, PsbC, PsbD, PsbE, PsbF, PsbH, PsbI, PsbJ, PsbK, PsbL, PsbM, PsbT, PsbY, PsbZ, Psb30/Ycf12, at least 3 peripheral proteins of the oxygen-evolving complex and a large number of cofactors. It forms dimeric complexes.

The protein resides in the plastid. It is found in the chloroplast thylakoid membrane. May control the interaction of photosystem II (PSII) cores with the light-harvesting antenna, regulates electron flow through the 2 photosystem reaction centers. PSII is a light-driven water plastoquinone oxidoreductase, using light energy to abstract electrons from H(2)O, generating a proton gradient subsequently used for ATP formation. This Welwitschia mirabilis (Tree tumbo) protein is Photosystem II reaction center protein Z.